An 831-amino-acid polypeptide reads, in one-letter code: Periplasmic nitrate reductase (831 aa).

Residues 1–31 (MTISRRDLLKAQAAGIAAMAANIPLSSQAPA) constitute a signal peptide (tat-type signal). In terms of domain architecture, 4Fe-4S Mo/W bis-MGD-type spans 41–97 (ITWSKAPCRFCGTGCGVMVGVKEGRVVATHGDLLAEVNRGLNCVKGYFLSKIMYGAD). 4 residues coordinate [4Fe-4S] cluster: C48, C51, C55, and C83. Mo-bis(molybdopterin guanine dinucleotide) is bound by residues K85, Q152, N177, C181, 214-221 (WGSNMAEM), 245-249 (STFTH), 264-266 (GTD), M375, Q379, N485, 511-512 (SD), K534, D561, and 721-730 (TGRVLEHWHS). A substrate-binding site is contributed by W797. Mo-bis(molybdopterin guanine dinucleotide) contacts are provided by N805 and K822.

This sequence belongs to the prokaryotic molybdopterin-containing oxidoreductase family. NasA/NapA/NarB subfamily. In terms of assembly, component of the periplasmic nitrate reductase NapAB complex composed of NapA and NapB. [4Fe-4S] cluster serves as cofactor. Requires Mo-bis(molybdopterin guanine dinucleotide) as cofactor. Post-translationally, predicted to be exported by the Tat system. The position of the signal peptide cleavage has not been experimentally proven.

The protein localises to the periplasm. The catalysed reaction is 2 Fe(II)-[cytochrome] + nitrate + 2 H(+) = 2 Fe(III)-[cytochrome] + nitrite + H2O. In terms of biological role, catalytic subunit of the periplasmic nitrate reductase complex NapAB. Receives electrons from NapB and catalyzes the reduction of nitrate to nitrite. The sequence is that of Periplasmic nitrate reductase from Paracoccus pantotrophus (Thiosphaera pantotropha).